The primary structure comprises 314 residues: Putative S-adenosyl-L-methionine-dependent methyltransferase MUL_4402 (314 aa).

Residues Asp132 and 161 to 162 (DL) each bind S-adenosyl-L-methionine. A disordered region spans residues 291–314 (RPVPDDAEGPVPPTLFVSAHRPAA).

Belongs to the UPF0677 family.

Its function is as follows. Exhibits S-adenosyl-L-methionine-dependent methyltransferase activity. This chain is Putative S-adenosyl-L-methionine-dependent methyltransferase MUL_4402, found in Mycobacterium ulcerans (strain Agy99).